Consider the following 1100-residue polypeptide: Collagen alpha-2(I) chain (1100 aa).

Residues 1–982 form a disordered region; sequence QYDGVKAPDP…PGPAGGGYDV (982 aa). Low complexity-rich tracts occupy residues 122 to 170, 200 to 209, and 216 to 237; these read EPGA…AAGP, EPGPNGAVGP, and PGNN…AGAP. The span at 239-249 shows a compositional bias: pro residues; sequence FPGPRGGPGPQ. Over residues 251–261 the composition is skewed to low complexity; the sequence is PQGAAGQRGLA. A compositionally biased stretch (gly residues) spans 268–277; the sequence is GVKGDGGPKG. Low complexity-rich tracts occupy residues 333–352, 358–385, 435–448, and 460–472; these read MPGA…PGDA, SGPA…AGPA, APGP…TGAT, and QGAS…QGLP. Residues 473–482 show a composition bias toward gly residues; sequence GPAGGAGEAG. Positions 507-517 are enriched in low complexity; it reads NPGAAGASGPQ. Residues 530–557 are compositionally biased toward gly residues; it reads GTDGGKGEPGAAGAAGGPGHQGPGGMPG. The segment covering 568–579 has biased composition (basic and acidic residues); it reads KGEKGEGGHRGP. Positions 633-646 are enriched in low complexity; that stretch reads PAGAPGFAGPPGAD. A compositionally biased stretch (gly residues) spans 656-665; it reads GPSGGKGESG. 3 stretches are compositionally biased toward low complexity: residues 666–691, 702–729, and 757–775; these read PSGP…TGAR, FPGA…PAGK, and SGEK…LGLQ. Residues 788–797 are compositionally biased toward gly residues; that stretch reads GSPGGAGAVG. 2 stretches are compositionally biased toward low complexity: residues 798–820 and 854–866; these read EAGR…LGLP and AGPT…PGNR. The segment covering 867–876 has biased composition (gly residues); it reads GESGPGGAAG. A compositionally biased stretch (low complexity) spans 877–892; the sequence is AVGPAGARGAAGPSGP. The span at 893–907 shows a compositional bias: basic and acidic residues; that stretch reads RGEKGVAGEKGERGM. The segment covering 916–935 has biased composition (low complexity); it reads LQGMPGPSGPSGDTGSAGPN. The 30-residue stretch at 1071-1100 folds into the Fibrillar collagen NC1 domain; the sequence is TRLPLLDLAPLDLGGADQEFGLDLGPVCFK.

The protein belongs to the fibrillar collagen family.

Its subcellular location is the secreted. The protein localises to the extracellular space. The protein resides in the extracellular matrix. The polypeptide is Collagen alpha-2(I) chain (Epinephelus caninus (Dogtooth grouper)).